Consider the following 112-residue polypeptide: Putative iron-sulfur cluster insertion protein ErpA (112 aa).

Iron-sulfur cluster-binding residues include Cys40, Cys104, and Cys106.

The protein belongs to the HesB/IscA family. In terms of assembly, homodimer. Iron-sulfur cluster is required as a cofactor.

Its function is as follows. Required for insertion of 4Fe-4S clusters. The protein is Putative iron-sulfur cluster insertion protein ErpA of Neisseria gonorrhoeae (strain ATCC 700825 / FA 1090).